The following is a 230-amino-acid chain: 7-cyano-7-deazaguanine synthase (230 aa).

I9–L19 serves as a coordination point for ATP. Zn(2+) contacts are provided by C192, C202, C205, and C208.

This sequence belongs to the QueC family. Requires Zn(2+) as cofactor.

It carries out the reaction 7-carboxy-7-deazaguanine + NH4(+) + ATP = 7-cyano-7-deazaguanine + ADP + phosphate + H2O + H(+). The protein operates within purine metabolism; 7-cyano-7-deazaguanine biosynthesis. Its function is as follows. Catalyzes the ATP-dependent conversion of 7-carboxy-7-deazaguanine (CDG) to 7-cyano-7-deazaguanine (preQ(0)). This chain is 7-cyano-7-deazaguanine synthase, found in Myxococcus xanthus (strain DK1622).